The following is a 554-amino-acid chain: Terpene synthase 17 (554 aa).

Residues aspartate 306, aspartate 310, and glutamate 458 each contribute to the Mg(2+) site. A DDXXD motif motif is present at residues 306 to 310 (DDTYD).

This sequence belongs to the terpene synthase family. Tpsa subfamily. The cofactor is Mg(2+). Requires Mn(2+) as cofactor. Mostly expressed in stem and trichomes, to a lower extent in leaves, flowers and roots and, at low levels, in fruits.

The catalysed reaction is (2Z,6Z)-farnesyl diphosphate = beta-bisabolene + diphosphate. The enzyme catalyses (2E,6E)-farnesyl diphosphate = (+)-valencene + diphosphate. It catalyses the reaction (2E,6E)-farnesyl diphosphate = (E)-beta-farnesene + diphosphate. It carries out the reaction (2E,6E)-farnesyl diphosphate = gamma-gurjunene + diphosphate. The catalysed reaction is (2Z,6Z)-farnesyl diphosphate = (E)-gamma-bisabolene + diphosphate. The enzyme catalyses (2E)-geranyl diphosphate = limonene + diphosphate. It catalyses the reaction (2E)-geranyl diphosphate = beta-myrcene + diphosphate. It carries out the reaction (2E)-geranyl diphosphate = (E)-beta-ocimene + diphosphate. The catalysed reaction is (2E)-geranyl diphosphate = terpinolene + diphosphate. The enzyme catalyses (2E)-geranyl diphosphate = gamma-terpinene + diphosphate. It catalyses the reaction (2Z,6Z)-farnesyl diphosphate = (Z)-gamma-bisabolene + diphosphate. It carries out the reaction (2E,6E)-farnesyl diphosphate = (1S,5S,6R)-alpha-bergamotene + diphosphate. The catalysed reaction is (2Z,6Z)-farnesyl diphosphate = (1S,5S,6S)-alpha-bergamotene + diphosphate. It functions in the pathway secondary metabolite biosynthesis; terpenoid biosynthesis. Its function is as follows. Sesquiterpene synthase involved in the biosynthesis of volatile compounds. Mediates the conversion of (2E,6E)-farnesyl diphosphate (FPP) into gamma-gurjunene, (E)-beta-farnesene and (+)-valencene, and of (2Z,6Z)-farnesyl diphosphate ((ZZ)-FPP) into (E)-alpha-bergamotene and (Z)-gamma-bisabolene as well as beta-bisabolene, (Z)-alpha-bergamotene and (E)-gamma-bisabolene to a lower extent. Can act with a low efficiency as a monoterpene synthase with geranyl diphosphate (GPP) as substrate, thus producing beta-myrcene, (E)-beta-ocimene, limonene, terpinolene, gamma-terpinene and (Z)-beta-ocimene. In Solanum lycopersicum (Tomato), this protein is Terpene synthase 17.